Here is a 190-residue protein sequence, read N- to C-terminus: A-type ATP synthase subunit E (190 aa).

This sequence belongs to the V-ATPase E subunit family. Has multiple subunits with at least A(3), B(3), C, D, E, F, H, I and proteolipid K(x).

The protein resides in the cell membrane. Functionally, component of the A-type ATP synthase that produces ATP from ADP in the presence of a proton gradient across the membrane. The polypeptide is A-type ATP synthase subunit E (Pyrobaculum neutrophilum (strain DSM 2338 / JCM 9278 / NBRC 100436 / V24Sta) (Thermoproteus neutrophilus)).